We begin with the raw amino-acid sequence, 368 residues long: GDP-fucose transporter 1 (368 aa).

Helical transmembrane passes span L64–L84, L98–I118, V141–Y161, F166–L186, T195–F215, W217–V237, L251–G271, F287–M307, and A332–I352.

The protein belongs to the TPT transporter family. SLC35C subfamily.

The protein resides in the golgi apparatus membrane. The catalysed reaction is GMP(out) + GDP-beta-L-fucose(in) = GMP(in) + GDP-beta-L-fucose(out). Functionally, antiporter specific for GDP-l-fucose and depending on the concomitant reverse transport of GMP. Involved in GDP-fucose import from the cytoplasm into the Golgi lumen. This is GDP-fucose transporter 1 (slc35c1) from Dictyostelium discoideum (Social amoeba).